A 170-amino-acid polypeptide reads, in one-letter code: Metalloproteinase inhibitor 4 (170 aa).

The 105-residue stretch at 1-105 (ISSEKVVPAS…SLNHHYHLNC (105 aa)) folds into the NTR domain. Involved in metalloproteinase-binding stretches follow at residues 6 to 9 (VVPA) and 48 to 49 (SS). 3 disulfide bridges follow: Cys-107/Cys-154, Cys-112/Cys-117, and Cys-125/Cys-146.

This sequence belongs to the protease inhibitor I35 (TIMP) family.

Its subcellular location is the secreted. Functionally, complexes with metalloproteinases (such as collagenases) and irreversibly inactivates them by binding to their catalytic zinc cofactor. The protein is Metalloproteinase inhibitor 4 (TIMP4) of Oryctolagus cuniculus (Rabbit).